The chain runs to 264 residues: 3-methyl-2-oxobutanoate hydroxymethyltransferase (264 aa).

Positions 45 and 84 each coordinate Mg(2+). 3-methyl-2-oxobutanoate-binding positions include 45–46 (DS), Asp-84, and Lys-112. Glu-114 provides a ligand contact to Mg(2+). Glu-181 serves as the catalytic Proton acceptor.

The protein belongs to the PanB family. As to quaternary structure, homodecamer; pentamer of dimers. It depends on Mg(2+) as a cofactor.

Its subcellular location is the cytoplasm. It carries out the reaction 3-methyl-2-oxobutanoate + (6R)-5,10-methylene-5,6,7,8-tetrahydrofolate + H2O = 2-dehydropantoate + (6S)-5,6,7,8-tetrahydrofolate. Its pathway is cofactor biosynthesis; (R)-pantothenate biosynthesis; (R)-pantoate from 3-methyl-2-oxobutanoate: step 1/2. Catalyzes the reversible reaction in which hydroxymethyl group from 5,10-methylenetetrahydrofolate is transferred onto alpha-ketoisovalerate to form ketopantoate. The polypeptide is 3-methyl-2-oxobutanoate hydroxymethyltransferase (Escherichia coli O157:H7).